The chain runs to 212 residues: Ribosomal RNA large subunit methyltransferase E (212 aa).

The segment at 1-26 (MPAERPSVSQKPKNPYKRPDAFTKAA) is disordered. Residues Gly63, Trp65, Asp83, Asp101, and Asp122 each coordinate S-adenosyl-L-methionine. The active-site Proton acceptor is the Lys162.

Belongs to the class I-like SAM-binding methyltransferase superfamily. RNA methyltransferase RlmE family.

It is found in the cytoplasm. The catalysed reaction is uridine(2552) in 23S rRNA + S-adenosyl-L-methionine = 2'-O-methyluridine(2552) in 23S rRNA + S-adenosyl-L-homocysteine + H(+). Specifically methylates the uridine in position 2552 of 23S rRNA at the 2'-O position of the ribose in the fully assembled 50S ribosomal subunit. This is Ribosomal RNA large subunit methyltransferase E from Sorangium cellulosum (strain So ce56) (Polyangium cellulosum (strain So ce56)).